The sequence spans 331 residues: Ribosomal large subunit pseudouridine synthase D (331 aa).

The region spanning 25–97 is the S4 RNA-binding domain; it reads RRFDAVLAEL…IPLDILYEDE (73 aa). Residue D145 is part of the active site.

This sequence belongs to the pseudouridine synthase RluA family.

The protein localises to the cytoplasm. It catalyses the reaction uridine(1911/1915/1917) in 23S rRNA = pseudouridine(1911/1915/1917) in 23S rRNA. Functionally, responsible for synthesis of pseudouridine from uracil at positions 1911, 1915 and 1917 in 23S ribosomal RNA. The chain is Ribosomal large subunit pseudouridine synthase D (rluD) from Xylella fastidiosa (strain Temecula1 / ATCC 700964).